The primary structure comprises 196 residues: Peptide deformylase (196 aa).

The Fe cation site is built by C97 and H139. E140 is a catalytic residue. Fe cation is bound at residue H143. Residues 171–187 are compositionally biased toward basic and acidic residues; that stretch reads LDAQEPKRAPHSPHTDA. A disordered region spans residues 171–196; sequence LDAQEPKRAPHSPHTDAQKPGAASDL.

This sequence belongs to the polypeptide deformylase family. It depends on Fe(2+) as a cofactor.

The enzyme catalyses N-terminal N-formyl-L-methionyl-[peptide] + H2O = N-terminal L-methionyl-[peptide] + formate. Its function is as follows. Removes the formyl group from the N-terminal Met of newly synthesized proteins. Requires at least a dipeptide for an efficient rate of reaction. N-terminal L-methionine is a prerequisite for activity but the enzyme has broad specificity at other positions. The chain is Peptide deformylase from Methylocella silvestris (strain DSM 15510 / CIP 108128 / LMG 27833 / NCIMB 13906 / BL2).